The primary structure comprises 171 residues: CDP-archaeol synthase (171 aa).

A run of 5 helical transmembrane segments spans residues 7–27, 54–74, 84–104, 115–135, and 141–161; these read IFWA…PVLV, GFIG…FITP, VKLA…GSFI, PAIG…AYPV, and GQII…NYFA.

Belongs to the CDP-archaeol synthase family. Mg(2+) serves as cofactor.

It is found in the cell membrane. The enzyme catalyses 2,3-bis-O-(geranylgeranyl)-sn-glycerol 1-phosphate + CTP + H(+) = CDP-2,3-bis-O-(geranylgeranyl)-sn-glycerol + diphosphate. It participates in membrane lipid metabolism; glycerophospholipid metabolism. Catalyzes the formation of CDP-2,3-bis-(O-geranylgeranyl)-sn-glycerol (CDP-archaeol) from 2,3-bis-(O-geranylgeranyl)-sn-glycerol 1-phosphate (DGGGP) and CTP. This reaction is the third ether-bond-formation step in the biosynthesis of archaeal membrane lipids. The sequence is that of CDP-archaeol synthase from Thermococcus kodakarensis (strain ATCC BAA-918 / JCM 12380 / KOD1) (Pyrococcus kodakaraensis (strain KOD1)).